We begin with the raw amino-acid sequence, 269 residues long: Troponin T, fast skeletal muscle (269 aa).

A compositionally biased stretch (acidic residues) spans 1–23 (MSDEEVEQVEEQYEEEEEAQEEA). Positions 1–72 (MSDEEVEQVE…EKVDFDDIQK (72 aa)) are disordered. Position 2 is an N-acetylserine (serine 2). Phosphoserine is present on serine 2. The span at 24–34 (AEVHEEVHEPE) shows a compositional bias: basic and acidic residues. Acidic residues predominate over residues 35–47 (EVQEDTAEEDAEE). Residues 60 to 72 (PEGEKVDFDDIQK) are compositionally biased toward basic and acidic residues. At serine 88 the chain carries Phosphoserine. Residues 111-153 (RAERAEQQRIRAEKERERQNRLAEEKARREEEDAKRRAEDDLK) show a composition bias toward basic and acidic residues. Residues 111 to 158 (RAERAEQQRIRAEKERERQNRLAEEKARREEEDAKRRAEDDLKKKKAL) are disordered. A phosphoserine mark is found at serine 159, serine 166, and serine 167. The interval 245–269 (RIDQAQKHSKKAGTPAKGKVGGRWK) is disordered.

Belongs to the troponin T family. As to expression, in fetal and adult fast skeletal muscles, with a higher level expression in fetal than in adult muscle.

Its function is as follows. Troponin T is the tropomyosin-binding subunit of troponin, the thin filament regulatory complex which confers calcium-sensitivity to striated muscle actomyosin ATPase activity. In Homo sapiens (Human), this protein is Troponin T, fast skeletal muscle (TNNT3).